Here is a 427-residue protein sequence, read N- to C-terminus: Histidine--tRNA ligase (427 aa).

It belongs to the class-II aminoacyl-tRNA synthetase family. As to quaternary structure, homodimer.

The protein resides in the cytoplasm. It catalyses the reaction tRNA(His) + L-histidine + ATP = L-histidyl-tRNA(His) + AMP + diphosphate + H(+). The polypeptide is Histidine--tRNA ligase (hisS) (Mycobacterium leprae (strain TN)).